We begin with the raw amino-acid sequence, 410 residues long: Peptidase T (410 aa).

His79 is a Zn(2+) binding site. Residue Asp81 is part of the active site. Asp142 contributes to the Zn(2+) binding site. Residue Glu176 is the Proton acceptor of the active site. Glu177, Asp199, and His381 together coordinate Zn(2+).

This sequence belongs to the peptidase M20B family. Requires Zn(2+) as cofactor.

The protein resides in the cytoplasm. The enzyme catalyses Release of the N-terminal residue from a tripeptide.. In terms of biological role, cleaves the N-terminal amino acid of tripeptides. This Bacillus pumilus (strain SAFR-032) protein is Peptidase T.